The sequence spans 408 residues: Aminoacylase-1 (408 aa).

His-80 is a binding site for Zn(2+). Asp-82 is an active-site residue. Asp-113 serves as a coordination point for Zn(2+). The active-site Proton acceptor is Glu-147. Glu-148, Glu-175, and His-373 together coordinate Zn(2+).

The protein belongs to the peptidase M20A family. As to quaternary structure, homodimer. Interacts with SPHK1. Requires Zn(2+) as cofactor.

The protein resides in the cytoplasm. The catalysed reaction is an N-acyl-L-amino acid + H2O = an L-alpha-amino acid + a carboxylate. The enzyme catalyses N-acetyl-L-methionine + H2O = L-methionine + acetate. It carries out the reaction N-acetyl-L-glutamine + H2O = L-glutamine + acetate. Functionally, catalyzes the hydrolysis of N-acetylated amino acids to acetate and free amino acids. This Mus musculus (Mouse) protein is Aminoacylase-1 (Acy1).